The following is a 221-amino-acid chain: Large ribosomal subunit protein uL4 (221 aa).

The disordered stretch occupies residues 46 to 74 (AGTASTKTRSEVSGGGRKPWPQKHTGRAR).

This sequence belongs to the universal ribosomal protein uL4 family. Part of the 50S ribosomal subunit.

Its function is as follows. One of the primary rRNA binding proteins, this protein initially binds near the 5'-end of the 23S rRNA. It is important during the early stages of 50S assembly. It makes multiple contacts with different domains of the 23S rRNA in the assembled 50S subunit and ribosome. Functionally, forms part of the polypeptide exit tunnel. This Petrotoga mobilis (strain DSM 10674 / SJ95) protein is Large ribosomal subunit protein uL4.